A 559-amino-acid polypeptide reads, in one-letter code: Putative ankyrin repeat protein RBE_0902 (559 aa).

10 ANK repeats span residues 11-40, 46-75, 81-110, 158-189, 228-257, 263-292, 298-327, 333-364, 372-402, and 524-554; these read DGWTVLTFAAAYGLEKVCEALIPKMSEQAI, DGNTALTWAAYTGLEKVCEALIPKMSDQAI, DGNTALSIARNKGFKNMCDLLTTIEATKQN, DDWTALTFAAAYGLEKVCELLIPKMTDQVINH, NNDTVLTLAANKSLGKICEILIPKMTDQAI, DGNTALIAAASSHLEKICEALIPKMSDQAI, YGNTALIAAASSGLEKVCETLIPKMTEQAI, QCDTALIFAVRNSLKKVCEVLIPKMSYEAINC, FGFTAFTWVTLNGDKKICELLIPKTSPEVII, and IDNNEIHISCLTTEIIAHIVEYLENEKWGLE.

This chain is Putative ankyrin repeat protein RBE_0902, found in Rickettsia bellii (strain RML369-C).